Consider the following 416-residue polypeptide: Probable glucan 1,3-beta-glucosidase A (416 aa).

The signal sequence occupies residues 1-21 (MLYNLSKAVLALSVLAASADA). The active-site Proton donor is the Glu-209. Disulfide bonds link Cys-290–Cys-415 and Cys-316–Cys-341. The active-site Nucleophile is the Glu-308.

This sequence belongs to the glycosyl hydrolase 5 (cellulase A) family. As to quaternary structure, monomer. The cofactor is Mn(2+).

It localises to the secreted. It catalyses the reaction Successive hydrolysis of beta-D-glucose units from the non-reducing ends of (1-&gt;3)-beta-D-glucans, releasing alpha-glucose.. Beta-glucanases participate in the metabolism of beta-glucan, the main structural component of the cell wall. It could also function biosynthetically as a transglycosylase. This Aspergillus terreus (strain NIH 2624 / FGSC A1156) protein is Probable glucan 1,3-beta-glucosidase A (exgA).